A 406-amino-acid chain; its full sequence is MTAPADSTEKSETSETTTLQTTEVSTVDVDPDLPRVLAKVPGTVWVVAFIAAAERFTYWGITTPWQLHAKPPQASEFARCIRPRRSESIHDIQCLHVFLLFNTNSFRDNLGRLSRSLSDIAPEFDKRFRKLPPTGNILPKAGSVLSCAIRGRFQLDAAMPSYQREHFAKEVSWDETFVNEIRRGLVACRVILGFILFFTCLSQASNNLISQAGQMKTYGIPNDTITAMNPIFCVIMGPVIQKGLYPLLNKNNVKFQSITRMATGFIMMSASMAFAAGVQKIIYDTGPCYDRPLTCPGAENGRIPNQVNVFLQTPTYIILAVAEIFSFVTLSEYTYTKAPTDMKAVVQALGQLGAAAGSAIGIAITPLAHDPSLIWMYTGLAVAMFLVAVVFWILFKKYNAIDREDK.

Residues 1–25 are disordered; that stretch reads MTAPADSTEKSETSETTTLQTTEVS. Positions 14–25 are enriched in low complexity; it reads SETTTLQTTEVS. Helical transmembrane passes span 184 to 204, 220 to 240, 262 to 282, 309 to 329, 344 to 364, and 373 to 393; these read GLVA…LSQA, IPND…GPVI, ATGF…QKII, VFLQ…SFVT, AVVQ…GIAI, and LIWM…VFWI.

Belongs to the major facilitator superfamily. Proton-dependent oligopeptide transporter (POT/PTR) (TC 2.A.17) family.

The protein localises to the membrane. In terms of biological role, peptide transporter; part of the gene cluster that mediates the biosynthesis of imizoquins A to D, tripeptide-derived alkaloids that serve a protective role against oxidative stress that are essential for normal germination. The sequence is that of Peptide transporter imqD from Aspergillus flavus (strain ATCC 200026 / FGSC A1120 / IAM 13836 / NRRL 3357 / JCM 12722 / SRRC 167).